Consider the following 249-residue polypeptide: MSGHSKWATTKHKKAVIDAKRGKMFAKLIKNVEVAARTGGGDPAGNPTLYDAIQKAKKNSVPNDNIDRAVKRGSGLESGGADYQTVMYEGYGPNGVALLIECLTDNRNRAATEVRTALTRNGGSFADAGSVSYLFSRKGVVIVAKAGTTEDDVMLAVLDAGAEEVNDLGEAFEVLSEPGDLVAVRTALQDAGIEYESAESSLVPSVSVPVDEEGARKILKLIDVLEDCDDVQNVFANFDASDELLAKLG.

This sequence belongs to the TACO1 family.

It localises to the cytoplasm. The chain is Probable transcriptional regulatory protein Strop_1792 from Salinispora tropica (strain ATCC BAA-916 / DSM 44818 / JCM 13857 / NBRC 105044 / CNB-440).